The sequence spans 360 residues: Peptide chain release factor 1 (360 aa).

At Q235 the chain carries N5-methylglutamine. A compositionally biased stretch (basic and acidic residues) spans 283-308; that stretch reads MQKRQQAEASERRNLLGSGDRSDRNR. Residues 283 to 313 form a disordered region; it reads MQKRQQAEASERRNLLGSGDRSDRNRTYNFP.

It belongs to the prokaryotic/mitochondrial release factor family. Post-translationally, methylated by PrmC. Methylation increases the termination efficiency of RF1.

The protein resides in the cytoplasm. Its function is as follows. Peptide chain release factor 1 directs the termination of translation in response to the peptide chain termination codons UAG and UAA. The polypeptide is Peptide chain release factor 1 (Yersinia enterocolitica serotype O:8 / biotype 1B (strain NCTC 13174 / 8081)).